The following is a 300-amino-acid chain: ATP-dependent (S)-NAD(P)H-hydrate dehydratase (300 aa).

Residues 14–293 form the YjeF C-terminal domain; sequence LLTLFKTIVP…NEISAVFRSD (280 aa). (6S)-NADPHX is bound by residues G114 and 167-173; that span reads NAMEFRR. ATP-binding positions include 198-202 and 219-228; these read KGVND and GSGRRCGGQG. D229 serves as a coordination point for (6S)-NADPHX.

It belongs to the NnrD/CARKD family. The cofactor is Mg(2+).

The enzyme catalyses (6S)-NADHX + ATP = ADP + phosphate + NADH + H(+). The catalysed reaction is (6S)-NADPHX + ATP = ADP + phosphate + NADPH + H(+). In terms of biological role, catalyzes the dehydration of the S-form of NAD(P)HX at the expense of ATP, which is converted to ADP. Together with NAD(P)HX epimerase, which catalyzes the epimerization of the S- and R-forms, the enzyme allows the repair of both epimers of NAD(P)HX, a damaged form of NAD(P)H that is a result of enzymatic or heat-dependent hydration. This is ATP-dependent (S)-NAD(P)H-hydrate dehydratase from Drosophila pseudoobscura pseudoobscura (Fruit fly).